A 239-amino-acid chain; its full sequence is Putative HTH-type transcriptional regulator YkgA (239 aa).

Positions 19–117 constitute an HTH araC/xylS-type domain; that stretch reads QQLLEWIECN…GCSPREYRHR (99 aa). 2 DNA-binding regions (H-T-H motif) span residues 36–57 and 84–107; these read EDIA…RNFM and MLDI…KKLF.

The protein is Putative HTH-type transcriptional regulator YkgA (ykgA) of Escherichia coli (strain K12).